A 228-amino-acid polypeptide reads, in one-letter code: Urease accessory protein UreF (228 aa).

It belongs to the UreF family. In terms of assembly, ureD, UreF and UreG form a complex that acts as a GTP-hydrolysis-dependent molecular chaperone, activating the urease apoprotein by helping to assemble the nickel containing metallocenter of UreC. The UreE protein probably delivers the nickel.

The protein localises to the cytoplasm. Required for maturation of urease via the functional incorporation of the urease nickel metallocenter. The chain is Urease accessory protein UreF from Prochlorococcus marinus subsp. pastoris (strain CCMP1986 / NIES-2087 / MED4).